The following is a 272-amino-acid chain: 2-dehydro-3-deoxyphosphooctonate aldolase (272 aa).

This sequence belongs to the KdsA family.

The protein resides in the cytoplasm. The catalysed reaction is D-arabinose 5-phosphate + phosphoenolpyruvate + H2O = 3-deoxy-alpha-D-manno-2-octulosonate-8-phosphate + phosphate. It participates in carbohydrate biosynthesis; 3-deoxy-D-manno-octulosonate biosynthesis; 3-deoxy-D-manno-octulosonate from D-ribulose 5-phosphate: step 2/3. The protein operates within bacterial outer membrane biogenesis; lipopolysaccharide biosynthesis. In Geobacter sulfurreducens (strain ATCC 51573 / DSM 12127 / PCA), this protein is 2-dehydro-3-deoxyphosphooctonate aldolase.